The chain runs to 56 residues: Large ribosomal subunit protein bL32 (56 aa).

Belongs to the bacterial ribosomal protein bL32 family.

In Bacillus cereus (strain ATCC 14579 / DSM 31 / CCUG 7414 / JCM 2152 / NBRC 15305 / NCIMB 9373 / NCTC 2599 / NRRL B-3711), this protein is Large ribosomal subunit protein bL32.